Consider the following 346-residue polypeptide: N-acetyl-gamma-glutamyl-phosphate reductase (346 aa).

The active site involves Cys150.

It belongs to the NAGSA dehydrogenase family. Type 1 subfamily.

Its subcellular location is the cytoplasm. It carries out the reaction N-acetyl-L-glutamate 5-semialdehyde + phosphate + NADP(+) = N-acetyl-L-glutamyl 5-phosphate + NADPH + H(+). The protein operates within amino-acid biosynthesis; L-arginine biosynthesis; N(2)-acetyl-L-ornithine from L-glutamate: step 3/4. Functionally, catalyzes the NADPH-dependent reduction of N-acetyl-5-glutamyl phosphate to yield N-acetyl-L-glutamate 5-semialdehyde. This Desulforamulus reducens (strain ATCC BAA-1160 / DSM 100696 / MI-1) (Desulfotomaculum reducens) protein is N-acetyl-gamma-glutamyl-phosphate reductase.